Consider the following 328-residue polypeptide: DNA-directed RNA polymerase subunit alpha (328 aa).

An alpha N-terminal domain (alpha-NTD) region spans residues 1 to 231 (MIYQMQMPEK…EHVSLFANFS (231 aa)). The interval 252–328 (MRKMLLTRIE…MDITKYQMKG (77 aa)) is alpha C-terminal domain (alpha-CTD).

The protein belongs to the RNA polymerase alpha chain family. In terms of assembly, homodimer. The RNAP catalytic core consists of 2 alpha, 1 beta, 1 beta' and 1 omega subunit. When a sigma factor is associated with the core the holoenzyme is formed, which can initiate transcription.

It catalyses the reaction RNA(n) + a ribonucleoside 5'-triphosphate = RNA(n+1) + diphosphate. DNA-dependent RNA polymerase catalyzes the transcription of DNA into RNA using the four ribonucleoside triphosphates as substrates. This chain is DNA-directed RNA polymerase subunit alpha, found in Chlorobium phaeobacteroides (strain BS1).